Here is a 2326-residue protein sequence, read N- to C-terminus: Telomere-associated protein RIF1 (2326 aa).

Disordered regions lie at residues 381-410, 1105-1965, and 1993-2050; these read QGTP…SPAT, YTQS…CITP, and VENK…DDSL. The segment covering 382 to 396 has biased composition (polar residues); the sequence is GTPSRVPSNPNSANP. Basic and acidic residues-rich tracts occupy residues 1112 to 1126 and 1150 to 1182; these read SLEK…EDFK and CKVD…RGDR. A compositionally biased stretch (low complexity) spans 1216-1225; the sequence is SAISCSSTSS. 2 stretches are compositionally biased toward polar residues: residues 1233 to 1242 and 1252 to 1270; these read QPASRRQSFI and SRPF…SQSA. A compositionally biased stretch (basic and acidic residues) spans 1290–1299; the sequence is KSGEESRKSS. Polar residues-rich tracts occupy residues 1318-1332 and 1341-1353; these read MEQQ…VTNS and SFVS…SPES. A compositionally biased stretch (basic and acidic residues) spans 1376 to 1402; the sequence is PDIKKAEAVMAEIEKVRAFEMDSKENT. The segment covering 1403–1412 has biased composition (polar residues); it reads PPKTAVSSEQ. Composition is skewed to basic and acidic residues over residues 1448 to 1480, 1489 to 1511, and 1519 to 1539; these read QDKE…DASQ, ASEH…DLGS, and GADE…KSDS. Residues 1564-1573 are compositionally biased toward polar residues; that stretch reads SSQGLLSSIE. The segment covering 1586-1595 has biased composition (basic residues); that stretch reads SLKKKSGKTK. Over residues 1596–1609 the composition is skewed to basic and acidic residues; sequence NKSDSLEGKRKDVQ. 2 stretches are compositionally biased toward polar residues: residues 1610–1640 and 1671–1683; these read PESQ…SEVS and RTSP…SVEQ. Residues 1697-1712 show a composition bias toward basic and acidic residues; that stretch reads RVSDEVLKGDENKCIE. Residues 1713-1745 show a composition bias toward polar residues; it reads KQSSVEQHSSVQPENVQGANTSGSDLSSLQMQD. The segment covering 1776 to 1785 has biased composition (basic and acidic residues); the sequence is SKSEDPRELI. The segment covering 1795–1813 has biased composition (polar residues); it reads AVSTAEVSGSSNLEESLSI. 3 stretches are compositionally biased toward basic and acidic residues: residues 1869–1884, 1908–1925, and 1932–1954; these read VEIK…DRAE, SEEK…HGEM, and DGSK…KEEA. Positions 2009–2036 are enriched in polar residues; it reads SFTSVNGSPSGVQARCTWSPSASPSTSI.

Belongs to the RIF1 family. In terms of assembly, interacts with TP53BP1 (when phosphorylated by ATM).

It localises to the nucleus. The protein localises to the chromosome. The protein resides in the telomere. It is found in the cytoplasm. Its subcellular location is the cytoskeleton. It localises to the spindle. Key regulator of TP53BP1 that plays a key role in the repair of double-strand DNA breaks (DSBs) in response to DNA damage: acts by promoting non-homologous end joining (NHEJ)-mediated repair of DSBs. In response to DNA damage, interacts with ATM-phosphorylated TP53BP1, allowing recruitment to DNA DSBs. Once recruited to DSBs, RIF1 and TP53BP1 act by promoting NHEJ-mediated repair of DSBs. In the same time, RIF1 and TP53BP1 specifically counteract DSBs resection via homologous recombination (HR) during G1 phase. The polypeptide is Telomere-associated protein RIF1 (Gallus gallus (Chicken)).